The primary structure comprises 505 residues: ATP synthase subunit beta (505 aa).

Position 157–164 (Gly-157–Thr-164) interacts with ATP.

Belongs to the ATPase alpha/beta chains family. As to quaternary structure, F-type ATPases have 2 components, CF(1) - the catalytic core - and CF(0) - the membrane proton channel. CF(1) has five subunits: alpha(3), beta(3), gamma(1), delta(1), epsilon(1). CF(0) has three main subunits: a(1), b(2) and c(9-12). The alpha and beta chains form an alternating ring which encloses part of the gamma chain. CF(1) is attached to CF(0) by a central stalk formed by the gamma and epsilon chains, while a peripheral stalk is formed by the delta and b chains.

The protein localises to the cell inner membrane. It carries out the reaction ATP + H2O + 4 H(+)(in) = ADP + phosphate + 5 H(+)(out). In terms of biological role, produces ATP from ADP in the presence of a proton gradient across the membrane. The catalytic sites are hosted primarily by the beta subunits. The protein is ATP synthase subunit beta of Bacteroides thetaiotaomicron (strain ATCC 29148 / DSM 2079 / JCM 5827 / CCUG 10774 / NCTC 10582 / VPI-5482 / E50).